An 849-amino-acid chain; its full sequence is Cytosolic phospholipase A2 zeta (849 aa).

Residues 27-145 form the C2 domain; sequence EKRGPLWRHW…KCGQPHKHTF (119 aa). 5 residues coordinate Ca(2+): aspartate 60, aspartate 66, aspartate 116, aspartate 118, and aspartate 123. The PLA2c domain occupies 306 to 849; sequence EMSSGDLDLR…RHQARERAGA (544 aa). The active-site Nucleophile is the serine 395. The active-site Proton acceptor is aspartate 680.

Requires Ca(2+) as cofactor. In terms of tissue distribution, expressed in myocardium (at protein level).

Its subcellular location is the cytoplasm. The protein resides in the cytosol. It localises to the cell membrane. It is found in the mitochondrion. It carries out the reaction a 1,2-diacyl-sn-glycero-3-phosphocholine + H2O = a 1-acyl-sn-glycero-3-phosphocholine + a fatty acid + H(+). It catalyses the reaction a 1-O-alkyl-2-acyl-sn-glycero-3-phosphocholine + H2O = a 1-O-alkyl-sn-glycero-3-phosphocholine + a fatty acid + H(+). The enzyme catalyses 1-hexadecanoyl-2-(9Z-octadecenoyl)-sn-glycero-3-phosphocholine + H2O = 2-(9Z-octadecenoyl)-sn-glycero-3-phosphocholine + hexadecanoate + H(+). The catalysed reaction is 1-hexadecanoyl-2-(9Z,12Z-octadecadienoyl)-sn-glycero-3-phosphocholine + H2O = (9Z,12Z)-octadecadienoate + 1-hexadecanoyl-sn-glycero-3-phosphocholine + H(+). It carries out the reaction 1-hexadecanoyl-2-(5Z,8Z,11Z,14Z-eicosatetraenoyl)-sn-glycero-3-phosphocholine + H2O = 1-hexadecanoyl-sn-glycero-3-phosphocholine + (5Z,8Z,11Z,14Z)-eicosatetraenoate + H(+). It catalyses the reaction 1-hexadecanoyl-2-(9Z,12Z-octadecadienoyl)-sn-glycero-3-phosphoethanolamine + H2O = 1-hexadecanoyl-sn-glycero-3-phosphoethanolamine + (9Z,12Z)-octadecadienoate + H(+). The enzyme catalyses 1-hexadecanoyl-2-(5Z,8Z,11Z,14Z-eicosatetraenoyl)-sn-glycero-3-phosphoethanolamine + H2O = 1-hexadecanoyl-sn-glycero-3-phosphoethanolamine + (5Z,8Z,11Z,14Z)-eicosatetraenoate + H(+). The catalysed reaction is 1-(5Z,8Z,11Z,14Z-eicosatetraenoyl)-2-O-hexadecyl-sn-glycero-3-phosphocholine + H2O = 2-O-hexadecyl-sn-glycero-3-phosphocholine + (5Z,8Z,11Z,14Z)-eicosatetraenoate + H(+). It carries out the reaction 1-O-hexadecyl-2-(5Z,8Z,11Z,14Z)-eicosatetraenoyl-sn-glycero-3-phosphocholine + H2O = 1-O-hexadecyl-sn-glycero-3-phosphocholine + (5Z,8Z,11Z,14Z)-eicosatetraenoate + H(+). It catalyses the reaction 1-hexadecanoyl-sn-glycero-3-phosphocholine + H2O = sn-glycerol 3-phosphocholine + hexadecanoate + H(+). Its activity is regulated as follows. Stimulated by cytosolic Ca(2+). Has calcium-dependent phospholipase and lysophospholipase activities with a potential role in membrane lipid remodeling and biosynthesis of lipid mediators. Preferentially hydrolyzes the ester bond of the fatty acyl group attached at sn-2 position of phospholipids (phospholipase A2 activity). Selectively hydrolyzes sn-2 arachidonoyl group from membrane phospholipids, providing the precursor for eicosanoid biosynthesis. In myocardial mitochondria, plays a major role in arachidonate release that is metabolically channeled to the formation of cardioprotective eicosanoids, epoxyeicosatrienoates (EETs). In Homo sapiens (Human), this protein is Cytosolic phospholipase A2 zeta (PLA2G4F).